The sequence spans 360 residues: Outer mitochondrial transmembrane helix translocase (360 aa).

Topologically, residues 1 to 15 are mitochondrial intermembrane; the sequence is MVHGEAFSRPLSRNE. The chain crosses the membrane as a helical span at residues 16–34; it reads VVGLIFRLTIFGAVTYFTI. Residues 35–360 lie on the Cytoplasmic side of the membrane; the sequence is KWMVDAIDPT…QNVLMHVSLD (326 aa). 133-140 provides a ligand contact to ATP; it reads GPPGCGKT.

This sequence belongs to the AAA ATPase family. MSP1 subfamily.

Its subcellular location is the mitochondrion outer membrane. It localises to the peroxisome membrane. The protein resides in the postsynaptic cell membrane. It catalyses the reaction [protein]-with a C-terminal TM segment(out) + ATP + H2O = [protein]-with a C-terminal TM segment(in) + ADP + phosphate + H(+). In terms of biological role, outer mitochondrial translocase required to remove mislocalized tail-anchored transmembrane proteins on mitochondria. Specifically recognizes and binds tail-anchored transmembrane proteins: acts as a dislocase that mediates the ATP-dependent extraction of mistargeted tail-anchored transmembrane proteins from the mitochondrion outer membrane. Also plays a critical role in regulating the surface expression of AMPA receptors (AMPAR), thereby regulating synaptic plasticity and learning and memory. This is Outer mitochondrial transmembrane helix translocase from Xenopus tropicalis (Western clawed frog).